We begin with the raw amino-acid sequence, 397 residues long: Acetate kinase (397 aa).

Asn8 contacts Mg(2+). Lys15 contributes to the ATP binding site. Residue Arg89 coordinates substrate. The active-site Proton donor/acceptor is Asp146. Residues 206–210 (HVGNG), 283–285 (DMR), and 331–335 (GMGEN) contribute to the ATP site. A Mg(2+)-binding site is contributed by Glu383.

The protein belongs to the acetokinase family. Homodimer. It depends on Mg(2+) as a cofactor. Mn(2+) is required as a cofactor.

Its subcellular location is the cytoplasm. The catalysed reaction is acetate + ATP = acetyl phosphate + ADP. The protein operates within metabolic intermediate biosynthesis; acetyl-CoA biosynthesis; acetyl-CoA from acetate: step 1/2. Functionally, catalyzes the formation of acetyl phosphate from acetate and ATP. Can also catalyze the reverse reaction. The polypeptide is Acetate kinase (Streptococcus agalactiae serotype III (strain NEM316)).